The following is a 146-amino-acid chain: Large-conductance mechanosensitive channel (146 aa).

The next 3 helical transmembrane spans lie at 21–41, 44–64, and 83–103; these read VGII…ADLI, IIGL…LGDG, and GSFI…FLLV.

Belongs to the MscL family. As to quaternary structure, homopentamer.

Its subcellular location is the cell inner membrane. In terms of biological role, channel that opens in response to stretch forces in the membrane lipid bilayer. May participate in the regulation of osmotic pressure changes within the cell. The sequence is that of Large-conductance mechanosensitive channel from Cereibacter sphaeroides (strain ATCC 17029 / ATH 2.4.9) (Rhodobacter sphaeroides).